Here is a 514-residue protein sequence, read N- to C-terminus: 2,3-bisphosphoglycerate-independent phosphoglycerate mutase (514 aa).

Mn(2+) contacts are provided by Asp-14 and Ser-64. The Phosphoserine intermediate role is filled by Ser-64. Substrate is bound by residues His-125, 155 to 156 (RD), Arg-187, Arg-193, 263 to 266 (RADR), and Lys-336. Residues Asp-403, His-407, Asp-444, His-445, and His-463 each coordinate Mn(2+).

Belongs to the BPG-independent phosphoglycerate mutase family. Monomer. Mn(2+) serves as cofactor.

The enzyme catalyses (2R)-2-phosphoglycerate = (2R)-3-phosphoglycerate. It participates in carbohydrate degradation; glycolysis; pyruvate from D-glyceraldehyde 3-phosphate: step 3/5. In terms of biological role, catalyzes the interconversion of 2-phosphoglycerate and 3-phosphoglycerate. The sequence is that of 2,3-bisphosphoglycerate-independent phosphoglycerate mutase from Enterobacter sp. (strain 638).